The chain runs to 255 residues: Aliphatic sulfonates import ATP-binding protein SsuB (255 aa).

One can recognise an ABC transporter domain in the interval 12 to 233 (LLLNAVSKHY…RLGSVRLAEL (222 aa)). 44 to 51 (GRSGGGKS) is a binding site for ATP.

This sequence belongs to the ABC transporter superfamily. Aliphatic sulfonates importer (TC 3.A.1.17.2) family. In terms of assembly, the complex is composed of two ATP-binding proteins (SsuB), two transmembrane proteins (SsuC) and a solute-binding protein (SsuA).

It localises to the cell inner membrane. The enzyme catalyses ATP + H2O + aliphatic sulfonate-[sulfonate-binding protein]Side 1 = ADP + phosphate + aliphatic sulfonateSide 2 + [sulfonate-binding protein]Side 1.. In terms of biological role, part of the ABC transporter complex SsuABC involved in aliphatic sulfonates import. Responsible for energy coupling to the transport system. The protein is Aliphatic sulfonates import ATP-binding protein SsuB of Shigella sonnei (strain Ss046).